Reading from the N-terminus, the 67-residue chain is Islet amyloid polypeptide (67 aa).

Residues 1 to 22 (MCILKLPIVLLVLSVAVNHLQA) form the signal peptide. The propeptide occupies 23-31 (SPVESHQVE). Cysteine 35 and cysteine 40 are disulfide-bonded.

It belongs to the calcitonin family. As to quaternary structure, can form homodimers. Interacts with IDE and INS. Interaction with INS inhibits homodimerization and fibril formation.

The protein localises to the secreted. In terms of biological role, amylin/IAPP is a glucoregulatory peptide hormone that plays an important role in the regulation of energy homeostasis. Selectively inhibits insulin-stimulated glucose utilization and glycogen deposition in muscle, while not affecting adipocyte glucose metabolism. IAPP function is mediated by the CALCR-RAMPs (AMYRs) receptor complexes. Amylin can also bind CALCR receptor in the absence of RAMPs, although it is more selective for AMYRs. This is Islet amyloid polypeptide (IAPP) from Oryctolagus cuniculus (Rabbit).